The chain runs to 69 residues: U-Asilidin(12)-Dg3b (69 aa).

Residues 1–19 form the signal peptide; it reads MRFLNIFLFFAVMIAFVSA. Positions 20–33 are excised as a propeptide; sequence SPVLEEEEIDIEPR. 3 disulfide bridges follow: cysteine 36-cysteine 59, cysteine 45-cysteine 65, and cysteine 49-cysteine 67.

This sequence belongs to the asilidin-12 family. In terms of tissue distribution, expressed by the venom gland.

It localises to the secreted. Its function is as follows. The recombinant peptide moderately increases Kv11.1/KCNH2/ERG1 currents and shifts the voltage-dependence of the channel activation to hyperpolarised potentials. In vivo, induces neurotoxic effects when injected into insects (tested on L.cuprina and A.domesticus). In Dolopus genitalis (Giant Australian assassin fly), this protein is U-Asilidin(12)-Dg3b.